The chain runs to 247 residues: Probable transcriptional regulatory protein LBF_0056 (247 aa).

This sequence belongs to the TACO1 family.

The protein resides in the cytoplasm. This Leptospira biflexa serovar Patoc (strain Patoc 1 / Ames) protein is Probable transcriptional regulatory protein LBF_0056.